Here is a 199-residue protein sequence, read N- to C-terminus: Holliday junction branch migration complex subunit RuvA (199 aa).

Positions 1–63 (MIASVRGEVL…EDSMTLYGFS (63 aa)) are domain I. Residues 64–141 (DTESKDLFSL…DAVATTAGAA (78 aa)) form a domain II region. Residues 141–145 (ASGAV) form a flexible linker region. The interval 146-199 (VGSSIRDQIVEALEGLGFPIKQAEQATDSVLAESPEATTSVALRSALSLLGKTR) is domain III.

The protein belongs to the RuvA family. As to quaternary structure, homotetramer. Forms an RuvA(8)-RuvB(12)-Holliday junction (HJ) complex. HJ DNA is sandwiched between 2 RuvA tetramers; dsDNA enters through RuvA and exits via RuvB. An RuvB hexamer assembles on each DNA strand where it exits the tetramer. Each RuvB hexamer is contacted by two RuvA subunits (via domain III) on 2 adjacent RuvB subunits; this complex drives branch migration. In the full resolvosome a probable DNA-RuvA(4)-RuvB(12)-RuvC(2) complex forms which resolves the HJ.

It localises to the cytoplasm. Its function is as follows. The RuvA-RuvB-RuvC complex processes Holliday junction (HJ) DNA during genetic recombination and DNA repair, while the RuvA-RuvB complex plays an important role in the rescue of blocked DNA replication forks via replication fork reversal (RFR). RuvA specifically binds to HJ cruciform DNA, conferring on it an open structure. The RuvB hexamer acts as an ATP-dependent pump, pulling dsDNA into and through the RuvAB complex. HJ branch migration allows RuvC to scan DNA until it finds its consensus sequence, where it cleaves and resolves the cruciform DNA. The polypeptide is Holliday junction branch migration complex subunit RuvA (Rhodococcus erythropolis (strain PR4 / NBRC 100887)).